Consider the following 121-residue polypeptide: Cu-Zn superoxide dismutase-like protein (121 aa).

An intrachain disulfide couples Cys48 to Cys98.

This sequence belongs to the Cu-Zn superoxide dismutase family.

It is found in the host cytoplasm. In terms of biological role, virion protein with no enzymatic activity. In Vaccinia virus (strain Ankara) (VACV), this protein is Cu-Zn superoxide dismutase-like protein.